The following is a 208-amino-acid chain: Holliday junction branch migration complex subunit RuvA (208 aa).

Residues 1–63 (MIGMLTGRVE…QDSVTLYGFL (63 aa)) form a domain I region. The segment at 64–142 (DRDSKRVFLQ…LNQSDDASAG (79 aa)) is domain II. The flexible linker stretch occupies residues 143–151 (NAPYQPTVD). Residues 151–208 (DAGVEQVVEGLVSLGWRQQDAQRAVNEACAENDVPMPLASDDAPRVLRLALARMDRGR) form a domain III region.

The protein belongs to the RuvA family. In terms of assembly, homotetramer. Forms an RuvA(8)-RuvB(12)-Holliday junction (HJ) complex. HJ DNA is sandwiched between 2 RuvA tetramers; dsDNA enters through RuvA and exits via RuvB. An RuvB hexamer assembles on each DNA strand where it exits the tetramer. Each RuvB hexamer is contacted by two RuvA subunits (via domain III) on 2 adjacent RuvB subunits; this complex drives branch migration. In the full resolvosome a probable DNA-RuvA(4)-RuvB(12)-RuvC(2) complex forms which resolves the HJ.

It localises to the cytoplasm. The RuvA-RuvB-RuvC complex processes Holliday junction (HJ) DNA during genetic recombination and DNA repair, while the RuvA-RuvB complex plays an important role in the rescue of blocked DNA replication forks via replication fork reversal (RFR). RuvA specifically binds to HJ cruciform DNA, conferring on it an open structure. The RuvB hexamer acts as an ATP-dependent pump, pulling dsDNA into and through the RuvAB complex. HJ branch migration allows RuvC to scan DNA until it finds its consensus sequence, where it cleaves and resolves the cruciform DNA. This is Holliday junction branch migration complex subunit RuvA from Bifidobacterium longum subsp. infantis (strain ATCC 15697 / DSM 20088 / JCM 1222 / NCTC 11817 / S12).